Reading from the N-terminus, the 376-residue chain is Heme chaperone HemW (376 aa).

Residues 1–236 (MFKLPPISLY…LKQSGYKKYE (236 aa)) form the Radical SAM core domain. An S-adenosyl-L-methionine-binding site is contributed by Tyr-10. Residues Cys-16, Cys-20, and Cys-23 each coordinate [4Fe-4S] cluster. Residues Gly-66, 67–68 (GT), Glu-99, Gln-126, Arg-138, and Asp-162 each bind S-adenosyl-L-methionine.

The protein belongs to the anaerobic coproporphyrinogen-III oxidase family. HemW subfamily. [4Fe-4S] cluster is required as a cofactor.

It is found in the cytoplasm. Probably acts as a heme chaperone, transferring heme to an unknown acceptor. Binds one molecule of heme per monomer, possibly covalently. Binds 1 [4Fe-4S] cluster. The cluster is coordinated with 3 cysteines and an exchangeable S-adenosyl-L-methionine. This Buchnera aphidicola subsp. Schizaphis graminum (strain Sg) protein is Heme chaperone HemW.